The sequence spans 166 residues: Phospholipase A2 inhibitor B1 (166 aa).

An N-terminal signal peptide occupies residues Met-1–Gly-19. The C-type lectin domain occupies Leu-46–Glu-161. 2 disulfide bridges follow: Cys-83/Cys-160 and Cys-138/Cys-152. N-linked (GlcNAc...) asparagine glycosylation occurs at Asn-122.

Belongs to the alpha-type phospholipase A2 inhibitor family. Homotrimer; non-covalently linked. As to expression, expressed by the liver.

It is found in the secreted. Functionally, this phospholipase A2 inhibitor binds directly phospholipase A2 in the presence or absence of calcium. This is Phospholipase A2 inhibitor B1 from Crotalus durissus terrificus (South American rattlesnake).